A 489-amino-acid chain; its full sequence is MTFRHCVAVDLGASSGRVMLARYDSKHRTLTLREIHRFVNCLQKTDGFDTWDIDSLEKDIRLGLKKVCNEGILIDSIGIDTWGVDYVLLDKQGQRVGLPVSYRDNRTTGIMPQALVQIGKSEIYRRSGIQFLPFNTIYQLRALTKQQPELTAQVAHALLMPDYFSYRLTGEMNWEYTNATTTQLVNINTDDWDDTLLAWTGAKKGWFGRPSHPGNVIGDWICPQGNRIPVVAVASHDTASAVIASPLANKHSAYLSSGTWSLMGFESKMPYTTDEALAANITNEGGAEGRYRVLKNIMGLWLLQRVLKERRITDLPALIAQTEALPACRFLINPNDDRFINPDDMRAEIQAACRETDQPVPVSDAELARCIFDSLALLYADILHELANLRGEKFTQLHIVGGGCQNALLNQLCADACGIRVMAGPVEASTLGNIGIQLMTLDELNNVDDFRQVISANYDLTTYIPNPDSEIARHVAQFQPKRQTKELCA.

Residue 13–17 (ASSGR) participates in ATP binding. A disulfide bridge links Cys-68 with Cys-222. Residues Gly-83 and 236-238 (HDT) each bind substrate. Catalysis depends on Asp-237, which acts as the Proton acceptor. Thr-259 contacts ATP. Residue Asn-296 participates in substrate binding. ATP is bound at residue Gln-304. A disulfide bond links Cys-353 and Cys-370. Gly-402 serves as a coordination point for ATP. Cys-413 and Cys-417 form a disulfide bridge.

The protein belongs to the rhamnulokinase family. The cofactor is Mg(2+).

It carries out the reaction L-rhamnulose + ATP = L-rhamnulose 1-phosphate + ADP + H(+). Its pathway is carbohydrate degradation; L-rhamnose degradation; glycerone phosphate from L-rhamnose: step 2/3. Its function is as follows. Involved in the catabolism of L-rhamnose (6-deoxy-L-mannose). Catalyzes the transfer of the gamma-phosphate group from ATP to the 1-hydroxyl group of L-rhamnulose to yield L-rhamnulose 1-phosphate. In Salmonella agona (strain SL483), this protein is Rhamnulokinase.